We begin with the raw amino-acid sequence, 92 residues long: Small ribosomal subunit protein uS19 (92 aa).

A disordered region spans residues 1–27; that stretch reads MARSIKKGPFADDHLKKKVEAQSGSEK. Residues 9 to 27 are compositionally biased toward basic and acidic residues; that stretch reads PFADDHLKKKVEAQSGSEK.

Belongs to the universal ribosomal protein uS19 family.

In terms of biological role, protein S19 forms a complex with S13 that binds strongly to the 16S ribosomal RNA. The sequence is that of Small ribosomal subunit protein uS19 from Staphylococcus saprophyticus subsp. saprophyticus (strain ATCC 15305 / DSM 20229 / NCIMB 8711 / NCTC 7292 / S-41).